Here is a 576-residue protein sequence, read N- to C-terminus: Proline--tRNA ligase (576 aa).

This sequence belongs to the class-II aminoacyl-tRNA synthetase family. ProS type 1 subfamily. In terms of assembly, homodimer.

It is found in the cytoplasm. It catalyses the reaction tRNA(Pro) + L-proline + ATP = L-prolyl-tRNA(Pro) + AMP + diphosphate. Functionally, catalyzes the attachment of proline to tRNA(Pro) in a two-step reaction: proline is first activated by ATP to form Pro-AMP and then transferred to the acceptor end of tRNA(Pro). As ProRS can inadvertently accommodate and process non-cognate amino acids such as alanine and cysteine, to avoid such errors it has two additional distinct editing activities against alanine. One activity is designated as 'pretransfer' editing and involves the tRNA(Pro)-independent hydrolysis of activated Ala-AMP. The other activity is designated 'posttransfer' editing and involves deacylation of mischarged Ala-tRNA(Pro). The misacylated Cys-tRNA(Pro) is not edited by ProRS. The sequence is that of Proline--tRNA ligase from Finegoldia magna (strain ATCC 29328 / DSM 20472 / WAL 2508) (Peptostreptococcus magnus).